Here is a 137-residue protein sequence, read N- to C-terminus: Small heat shock protein IbpA (137 aa).

A sHSP domain is found at 28–137 (SQSNGGYPPY…ANKPRRIEIN (110 aa)).

This sequence belongs to the small heat shock protein (HSP20) family. As to quaternary structure, monomer. Forms homomultimers of about 100-150 subunits at optimal growth temperatures. Conformation changes to monomers at high temperatures or high ionic concentrations.

It is found in the cytoplasm. Functionally, associates with aggregated proteins, together with IbpB, to stabilize and protect them from irreversible denaturation and extensive proteolysis during heat shock and oxidative stress. Aggregated proteins bound to the IbpAB complex are more efficiently refolded and reactivated by the ATP-dependent chaperone systems ClpB and DnaK/DnaJ/GrpE. Its activity is ATP-independent. The protein is Small heat shock protein IbpA of Klebsiella pneumoniae (strain 342).